The chain runs to 300 residues: GTPase Era (300 aa).

The Era-type G domain occupies 8–176 (RCGYVAIVGR…EALIAKHLPE (169 aa)). The tract at residues 16–23 (GRPNVGKS) is G1. 16 to 23 (GRPNVGKS) is a GTP binding site. The tract at residues 42-46 (QTTRH) is G2. A G3 region spans residues 63 to 66 (DTPG). Residues 63–67 (DTPGM) and 125–128 (NKTD) contribute to the GTP site. Positions 125 to 128 (NKTD) are G4. A G5 region spans residues 155–157 (ISA). Residues 199-283 (VREKIMRQLG…MLNLWVKVKG (85 aa)) form the KH type-2 domain.

Belongs to the TRAFAC class TrmE-Era-EngA-EngB-Septin-like GTPase superfamily. Era GTPase family. In terms of assembly, monomer.

The protein localises to the cytoplasm. The protein resides in the cell inner membrane. An essential GTPase that binds both GDP and GTP, with rapid nucleotide exchange. Plays a role in 16S rRNA processing and 30S ribosomal subunit biogenesis and possibly also in cell cycle regulation and energy metabolism. The polypeptide is GTPase Era (Pseudomonas putida (strain W619)).